The chain runs to 480 residues: MPKEVITQRSVDYNQWYLDIVREADLAEVAEVVRGCIVVKAHGWAIWELMQRALDDRIKATGHANVQFPLLIPKSFIMKEAEHVEGFAPEVAEVTRAGGEELAEPYIIRPTSETIIGYFYSKWIRSYRDLPLLYNQWANVMRWEMRTRPFLRTAEFWWQEGHTAHATEAEAEEETLRILHDVYADFVEKEMAVPVIRGLKTEKEKFPGALRSYCIEAMMQDGRALQAGTSHNLGQNFARAFDITFTDQNNTIQYAWTTSWGVSTRLIGALIMTHSDDEGLVLPPRLAPIQVVVVPIYKNDEERSLVMAAVEQMTAAWKGRLRFKVDDRDNYSPGYKFNEWELKGVPVRIEVGPKDVAKETVALARRDIPGKAGKSFVPQAGLTERIEALLNEMQTALFQRALAFREAHTADVTSYDELKEQIERGFARAYWAGDTADEKRIQEETRATIRCIPLEQPGSVGRCVYTGRETDRQVIFARAY.

The protein belongs to the class-II aminoacyl-tRNA synthetase family. ProS type 3 subfamily. In terms of assembly, homodimer.

It is found in the cytoplasm. It catalyses the reaction tRNA(Pro) + L-proline + ATP = L-prolyl-tRNA(Pro) + AMP + diphosphate. Catalyzes the attachment of proline to tRNA(Pro) in a two-step reaction: proline is first activated by ATP to form Pro-AMP and then transferred to the acceptor end of tRNA(Pro). This chain is Proline--tRNA ligase, found in Chloroflexus aurantiacus (strain ATCC 29364 / DSM 637 / Y-400-fl).